The following is a 362-amino-acid chain: E3 ubiquitin-protein ligase TM129 (362 aa).

Over 1–6 the chain is Lumenal; that stretch reads MESPEV. Residues 7–27 form a helical membrane-spanning segment; it reads TFTLAYVVFSVCFVFTPNEFH. Residues 28 to 56 are Cytoplasmic-facing; that stretch reads SAGITVQNLLSGWLGSEDVAFVHYHIRRS. A helical membrane pass occupies residues 57–77; the sequence is TATLLTHSLLPMGYFIGMCFA. At 78–94 the chain is on the lumenal side; it reads APEKELYNVYKAADGWK. A helical membrane pass occupies residues 95–115; sequence VFVLITVLLPVTTSILAFYWS. Residues 116–362 are Cytoplasmic-facing; the sequence is QKRWGNHPLA…FCIVDVCIVR (247 aa). The segment at 285-350 adopts an RING-type; degenerate zinc-finger fold; that stretch reads CIGCMQTNAN…SSHVPCPTCR (66 aa).

The protein belongs to the TMEM129 family. In terms of assembly, integral component of ER-resident dislocation complexes.

The protein resides in the endoplasmic reticulum membrane. It carries out the reaction S-ubiquitinyl-[E2 ubiquitin-conjugating enzyme]-L-cysteine + [acceptor protein]-L-lysine = [E2 ubiquitin-conjugating enzyme]-L-cysteine + N(6)-ubiquitinyl-[acceptor protein]-L-lysine.. Its pathway is protein modification; protein ubiquitination. Its function is as follows. E3 ubiquitin-protein ligase involved in ER-associated protein degradation, preferentially associates with the E2 enzyme UBE2J2. The polypeptide is E3 ubiquitin-protein ligase TM129 (tmem129) (Xenopus tropicalis (Western clawed frog)).